A 715-amino-acid polypeptide reads, in one-letter code: Protein Hook homolog 1 (715 aa).

One can recognise a Calponin-homology (CH) domain in the interval 6-122 (TVLCESLIIW…RLLQLILGCA (117 aa)). Coiled-coil stretches lie at residues 167–434 (AGDT…DQLL) and 463–656 (IRLQ…EEKL).

The protein belongs to the hook family. As to quaternary structure, interacts with microtubules.

The protein localises to the cytoplasm. The protein resides in the cytoskeleton. Its function is as follows. May function to promote vesicle trafficking and/or fusion. The polypeptide is Protein Hook homolog 1 (hook1) (Danio rerio (Zebrafish)).